The chain runs to 209 residues: Large ribosomal subunit protein uL3 (209 aa).

Residues 127-153 are disordered; it reads NASRGPMSHGSKFHRAPGSMGAASDPS.

This sequence belongs to the universal ribosomal protein uL3 family. In terms of assembly, part of the 50S ribosomal subunit. Forms a cluster with proteins L14 and L19.

Its function is as follows. One of the primary rRNA binding proteins, it binds directly near the 3'-end of the 23S rRNA, where it nucleates assembly of the 50S subunit. The chain is Large ribosomal subunit protein uL3 from Clostridium perfringens (strain SM101 / Type A).